The primary structure comprises 104 residues: Large ribosomal subunit protein bL21 (104 aa).

The protein belongs to the bacterial ribosomal protein bL21 family. Part of the 50S ribosomal subunit. Contacts protein L20.

Functionally, this protein binds to 23S rRNA in the presence of protein L20. This Leptospira borgpetersenii serovar Hardjo-bovis (strain JB197) protein is Large ribosomal subunit protein bL21.